We begin with the raw amino-acid sequence, 375 residues long: Meiotic driver cw27 (375 aa).

Disordered stretches follow at residues methionine 1–proline 42 and aspartate 74–aspartate 103. Basic and acidic residues predominate over residues serine 11–proline 29. The next 7 membrane-spanning stretches (helical) occupy residues phenylalanine 108–cysteine 128, tryptophan 145–phenylalanine 165, alanine 172–alanine 192, glutamate 208–valine 228, threonine 245–tryptophan 265, leucine 272–phenylalanine 292, and valine 336–glycine 356.

This sequence belongs to the WTF family. In terms of assembly, homomer. Forms protein aggregates. The two isoforms can interact with each other and with themselves. High sequence similarity is required for their interaction.

It localises to the spore membrane. It is found in the vacuole. The protein localises to the membrane. The protein resides in the ascus epiplasm. Its subcellular location is the cytoplasm. It localises to the endoplasmic reticulum. Promotes unequal transmission of alleles from the parental zygote to progeny spores by acting as poison/antidote system where the poison and antidote proteins are produced from the same locus; the poison component is trans-acting and targets all spores within an ascus whereas the antidote component is spore-specific, leading to poisoning of all progeny that do not inherit the allele. Functionally, localizes isoform 2 to the vacuole thereby facilitating its degradation. Its function is as follows. Forms toxic aggregates that disrupt spore maturation. This chain is Meiotic driver cw27, found in Schizosaccharomyces pombe (Fission yeast).